Here is a 367-residue protein sequence, read N- to C-terminus: FAD synthetase 2, chloroplastic (367 aa).

Residues 1-57 constitute a chloroplast transit peptide; the sequence is MLCGGSRVLQHLSDHNHHNSIGLGLGFCGAKIVQLSSFFLRPSQAMAKSHHFSRKLR.

It depends on Mg(2+) as a cofactor.

The protein localises to the plastid. It localises to the chloroplast. The enzyme catalyses FMN + ATP + H(+) = FAD + diphosphate. The protein operates within cofactor biosynthesis; FAD biosynthesis; FAD from FMN: step 1/1. Catalyzes the adenylation of flavin mononucleotide (FMN) to form flavin adenine dinucleotide (FAD) coenzyme. This chain is FAD synthetase 2, chloroplastic, found in Arabidopsis thaliana (Mouse-ear cress).